Reading from the N-terminus, the 255-residue chain is Cytochrome c oxidase subunit 2 (255 aa).

The first 16 residues, 1-16 (MFNLFPPFGANTAIFN), serve as a signal peptide directing secretion. The Mitochondrial intermembrane portion of the chain corresponds to 17–43 (DAPQPWQVGFQDGASPTQEGITELHDS). The chain crosses the membrane as a helical span at residues 44–64 (IFFYLVIICFGVLWVLSSVIV). Over 65–80 (NFNSNKSQLVYKYANH) the chain is Mitochondrial matrix. The helical transmembrane segment at 81–101 (GTLIELIWTITPALVLIAIAF) threads the bilayer. Residues 102 to 255 (PSFKLLYLMD…KYLAWIDSQA (154 aa)) are Mitochondrial intermembrane-facing. The Cu cation site is built by H189, C224, E226, C228, H232, and M235. E226 contributes to the Mg(2+) binding site.

Belongs to the cytochrome c oxidase subunit 2 family. As to quaternary structure, component of the cytochrome c oxidase (complex IV, CIV), a multisubunit enzyme composed of a catalytic core of 3 subunits and several supernumerary subunits. The complex exists as a monomer or a dimer and forms supercomplexes (SCs) in the inner mitochondrial membrane with ubiquinol-cytochrome c oxidoreductase (cytochrome b-c1 complex, complex III, CIII). Cu cation serves as cofactor.

The protein resides in the mitochondrion inner membrane. The enzyme catalyses 4 Fe(II)-[cytochrome c] + O2 + 8 H(+)(in) = 4 Fe(III)-[cytochrome c] + 2 H2O + 4 H(+)(out). In terms of biological role, component of the cytochrome c oxidase, the last enzyme in the mitochondrial electron transport chain which drives oxidative phosphorylation. The respiratory chain contains 3 multisubunit complexes succinate dehydrogenase (complex II, CII), ubiquinol-cytochrome c oxidoreductase (cytochrome b-c1 complex, complex III, CIII) and cytochrome c oxidase (complex IV, CIV), that cooperate to transfer electrons derived from NADH and succinate to molecular oxygen, creating an electrochemical gradient over the inner membrane that drives transmembrane transport and the ATP synthase. Cytochrome c oxidase is the component of the respiratory chain that catalyzes the reduction of oxygen to water. Electrons originating from reduced cytochrome c in the intermembrane space (IMS) are transferred via the dinuclear copper A center (CU(A)) of subunit 2 and heme A of subunit 1 to the active site in subunit 1, a binuclear center (BNC) formed by heme A3 and copper B (CU(B)). The BNC reduces molecular oxygen to 2 water molecules using 4 electrons from cytochrome c in the IMS and 4 protons from the mitochondrial matrix. This is Cytochrome c oxidase subunit 2 (COX2) from Mycosarcoma maydis (Corn smut fungus).